Consider the following 249-residue polypeptide: DNA repair protein RecO (249 aa).

The protein belongs to the RecO family.

Its function is as follows. Involved in DNA repair and RecF pathway recombination. This is DNA repair protein RecO from Lactobacillus delbrueckii subsp. bulgaricus (strain ATCC BAA-365 / Lb-18).